The following is a 517-amino-acid chain: Protein disulfide isomerase-like 1-2 (517 aa).

An N-terminal signal peptide occupies residues 1 to 23 (MAVNLVLSFALAILISSSPTAVG). Positions 24–143 (VDATEELKEA…IVEYLKRQVG (120 aa)) constitute a Thioredoxin 1 domain. The N-linked (GlcNAc...) asparagine glycan is linked to asparagine 41. Residues cysteine 61 and cysteine 64 each act as nucleophile in the active site. Cysteine 61 and cysteine 64 are oxidised to a cystine. Asparagine 301 carries N-linked (GlcNAc...) asparagine glycosylation. The region spanning 357-484 (VEYGNLTPYV…IISFINENRG (128 aa)) is the Thioredoxin 2 domain. Residues cysteine 407 and cysteine 410 each act as nucleophile in the active site. A disulfide bond links cysteine 407 and cysteine 410. Residues 514–517 (KDEL) carry the Prevents secretion from ER motif.

The protein belongs to the protein disulfide isomerase family.

The protein resides in the endoplasmic reticulum lumen. The catalysed reaction is Catalyzes the rearrangement of -S-S- bonds in proteins.. In terms of biological role, acts as a protein-folding catalyst that interacts with nascent polypeptides to catalyze the formation, isomerization, and reduction or oxidation of disulfide bonds. May play a role in storage protein biogenesis. The chain is Protein disulfide isomerase-like 1-2 (PDIL1-2) from Oryza sativa subsp. japonica (Rice).